The chain runs to 354 residues: DNA polymerase IV (354 aa).

The 182-residue stretch at I6–G187 folds into the UmuC domain. 2 residues coordinate Mg(2+): D10 and D105. E106 is an active-site residue.

It belongs to the DNA polymerase type-Y family. As to quaternary structure, monomer. Mg(2+) serves as cofactor.

The protein localises to the cytoplasm. It carries out the reaction DNA(n) + a 2'-deoxyribonucleoside 5'-triphosphate = DNA(n+1) + diphosphate. Functionally, poorly processive, error-prone DNA polymerase involved in untargeted mutagenesis. Copies undamaged DNA at stalled replication forks, which arise in vivo from mismatched or misaligned primer ends. These misaligned primers can be extended by PolIV. Exhibits no 3'-5' exonuclease (proofreading) activity. May be involved in translesional synthesis, in conjunction with the beta clamp from PolIII. The polypeptide is DNA polymerase IV (Pseudomonas putida (strain GB-1)).